Reading from the N-terminus, the 769-residue chain is 5-methyltetrahydropteroyltriglutamate--homocysteine methyltransferase (769 aa).

5-methyltetrahydropteroyltri-L-glutamate-binding positions include 17-20 (RELK) and K118. Residues 441 to 443 (IGS) and E494 each bind L-homocysteine. L-methionine is bound by residues 441-443 (IGS) and E494. 5-methyltetrahydropteroyltri-L-glutamate contacts are provided by residues 525-526 (RC) and W571. Residue D609 participates in L-homocysteine binding. D609 provides a ligand contact to L-methionine. E615 is a 5-methyltetrahydropteroyltri-L-glutamate binding site. Zn(2+) contacts are provided by H651, C653, and E675. H705 functions as the Proton donor in the catalytic mechanism. C737 serves as a coordination point for Zn(2+).

It belongs to the vitamin-B12 independent methionine synthase family. Requires Zn(2+) as cofactor.

It catalyses the reaction 5-methyltetrahydropteroyltri-L-glutamate + L-homocysteine = tetrahydropteroyltri-L-glutamate + L-methionine. Its pathway is amino-acid biosynthesis; L-methionine biosynthesis via de novo pathway; L-methionine from L-homocysteine (MetE route): step 1/1. Its function is as follows. Catalyzes the transfer of a methyl group from 5-methyltetrahydrofolate to homocysteine resulting in methionine formation. The sequence is that of 5-methyltetrahydropteroyltriglutamate--homocysteine methyltransferase from Blochmanniella floridana.